Consider the following 272-residue polypeptide: Imidazole glycerol phosphate synthase subunit HisF (272 aa).

Catalysis depends on residues aspartate 11 and aspartate 130.

The protein belongs to the HisA/HisF family. In terms of assembly, heterodimer of HisH and HisF.

The protein localises to the cytoplasm. The catalysed reaction is 5-[(5-phospho-1-deoxy-D-ribulos-1-ylimino)methylamino]-1-(5-phospho-beta-D-ribosyl)imidazole-4-carboxamide + L-glutamine = D-erythro-1-(imidazol-4-yl)glycerol 3-phosphate + 5-amino-1-(5-phospho-beta-D-ribosyl)imidazole-4-carboxamide + L-glutamate + H(+). Its pathway is amino-acid biosynthesis; L-histidine biosynthesis; L-histidine from 5-phospho-alpha-D-ribose 1-diphosphate: step 5/9. In terms of biological role, IGPS catalyzes the conversion of PRFAR and glutamine to IGP, AICAR and glutamate. The HisF subunit catalyzes the cyclization activity that produces IGP and AICAR from PRFAR using the ammonia provided by the HisH subunit. In Methanococcus maripaludis (strain DSM 14266 / JCM 13030 / NBRC 101832 / S2 / LL), this protein is Imidazole glycerol phosphate synthase subunit HisF.